The sequence spans 1042 residues: MICASKITMLGLLVMCTLGGVLGKVDIRQTTANKAFMETMRADGYEVVHPFQIRDKNERIGIDTRNYFLKAQEHYSHVTIVIRSNQLGRLKLVLERNNFIFLNQTAFHKLDADGERVIQNRVENCYYQGTVGGEESSFVALSSCNGLRGVISFANGTTFGIWPLDGGDRNSRRHPHILYKSEWSQEAKCGSSMAHAVGQRRMKKHVHKHRSHHHEHNKKRDVSKRTKYVEVALIADYEFMKARGLHDLDAISYMLESLNIADSMLSRDLNIRLSAVYVELWTDVQRIDLWEDIERTLSGVVDYASGHIYHIQKDASILFTAGSFANQEVSNAAIRSICTARSAVIVKGVEQFATHWNGELLAQSIGHLLGLEHDTTACSCEPSPECVMRQQPGRVGGGGGSPFSWQFSKCSVARMHGIWQDGNIQCLLNKPFQVSELRECGNGVVDGSEECDCGSRENCQDPCCDPLTCTLRPHAQCAAHHKCCHRCELRKAGDTCRSSKSPCDVAEQCDGKSGDCPPDGHLIDGTVCGTDGQCWRGNCSDSHQQCQKLWGREARVAEPVCFEQNTKGAEYANCGQRQADGTYHPCQIEDTRCGTLHCHSGSITPIDSSLKAFTFHFTENSHQIQCKSIASAAVGLTSDGTNCASGRVCVAGSCVEMSSVSSATACPTNNLALLCSGHGHCTTTARCVCFNGWSGVACDIRSNSSTYQGSMGFGEEGSGGSSQKSSERKTIMIPHLNIGTTLETATLFAILLGFGVFLLLCLVCLMLCYRRRSVVEIPKPSDEKDEESPDRQIKFGNMPSYREEKRKRKSNKKIYGALNRITEADERDSTSLRSRDSAGGSQQLVDRRNGAPVVVGGIRDPYAGEHIYAESSSNHLTRQFRGINSDGSYPLRSFGSWRSSAPISPASSSGQLTDVSTATTPLRLNKIGKFLKTLQSDDESPSPFSDHQSFTTGIGIGARLEQMQFGGGGDEELSAVEADHDVGSNTESSRGCEEPMDPGSWDSPTLVNGASSSSTSNNYNFRQSPSLFSDPFKLEMTNSMHN.

The first 23 residues, 1-23 (MICASKITMLGLLVMCTLGGVLG), serve as a signal peptide directing secretion. At 24 to 746 (KVDIRQTTAN…NIGTTLETAT (723 aa)) the chain is on the extracellular side. Residues N103 and N155 are each glycosylated (N-linked (GlcNAc...) asparagine). Residues 227–431 (KYVEVALIAD…GNIQCLLNKP (205 aa)) enclose the Peptidase M12B domain. 4 disulfide bridges follow: C338–C426, C378–C410, C380–C386, and C496–C516. A Disintegrin domain is found at 437 to 524 (LRECGNGVVD…DCPPDGHLID (88 aa)). N-linked (GlcNAc...) asparagine glycosylation occurs at N538. The region spanning 662–699 (SATACPTNNLALLCSGHGHCTTTARCVCFNGWSGVACD) is the EGF-like domain. Intrachain disulfides connect C666-C681, C675-C687, and C689-C698. The N-linked (GlcNAc...) asparagine glycan is linked to N703. The chain crosses the membrane as a helical span at residues 747-767 (LFAILLGFGVFLLLCLVCLML). Topologically, residues 768–1042 (CYRRRSVVEI…KLEMTNSMHN (275 aa)) are cytoplasmic. 3 disordered regions span residues 779–809 (KPSDEKDEESPDRQIKFGNMPSYREEKRKRK), 825–850 (DERDSTSLRSRDSAGGSQQLVDRRNG), and 980–1028 (HDVG…PSLF). The segment covering 825–836 (DERDSTSLRSRD) has biased composition (basic and acidic residues). A compositionally biased stretch (polar residues) spans 1002 to 1027 (DSPTLVNGASSSSTSNNYNFRQSPSL).

The protein resides in the cell membrane. Its function is as follows. Involved in the migration of sex myoblasts (progenitors of egg-laying muscles), Q neuroblasts and BDU interneurons during development. Involved in axon branching and guidance of neurons including GABAergic type D motor neurons. Promotes sex myoblast migration and positioning independently of gonad attraction cues. May act downstream of mig-13 in order to promote the guidance, migration and positioning of Q neuroblasts and their descendants along the anteroposterior body axis. Required for coordinated movements. In Caenorhabditis elegans, this protein is Disintegrin and metalloproteinase domain-containing protein unc-71.